Here is a 608-residue protein sequence, read N- to C-terminus: Formate hydrogenlyase subunit 3 (608 aa).

The next 12 helical transmembrane spans lie at 10–26 (GVAWFVAAAVLAFLFSF), 44–67 (LYTAAAGFTVLTGAVGVSGALSLV), 76–93 (LNAIWLITLGLCGLFVSL), 116–140 (AAAVCAVIASNLGMFVVMAEIMALC), 153–173 (LWFALGRLGTLLLAIACWLLW), 197–218 (IWLLGVIGFGLLAGIIPLHGWV), 229–251 (AAALFSTVVMKIGLLGILTLSLL), 258–280 (WWGIALLVLGMITAFVGGLYALV), 296–312 (IGIILLGLGAGVTGIAL), 416–440 (LAVGLAITGALAVMCMAKVYGVTFL), 453–476 (CAPLLMSVSVVALAICCVIGGVAA), and 502–521 (MITLLLIACPLLPFIIMAIC).

This sequence belongs to the complex I subunit 4 family. In terms of assembly, FHL comprises of a formate dehydrogenase, unidentified electron carriers and a hydrogenase (isoenzyme 3). In this non-energy conserving pathway molecular hydrogen and carbodioxide from formate are released.

It is found in the cell inner membrane. The protein is Formate hydrogenlyase subunit 3 (hycC) of Escherichia coli (strain K12).